The sequence spans 293 residues: uncharacterized protein (293 aa).

2 disordered regions span residues 121–154 (NLNF…SQNS) and 254–274 (DILQ…PQQQ). Positions 133 to 149 (SYHHHSHSHSHHSHSHS) are enriched in basic residues. Residues 260–272 (PPSPTPTPPPPPQ) are compositionally biased toward pro residues.

This is an uncharacterized protein from Dictyostelium discoideum (Social amoeba).